The sequence spans 373 residues: MAALFEENDSYSDSENEEDFSGFLSEIEENENEDEFENDDEFEDDDELENVDELEDDELSSEEVDIPSENEVIVELHDGQAEVEESLLDALLGKALAGDQMNSRIEGLFEDLDSSVEPDIIDRSELEDVDSGISVGAVSSSSAETQASDAKCKNKDAFDMSSLKKYMQYITEEEHAVSVEDIPDFASKKNVYGTSFNVRNGIMSRPPRFEFARHDQRWIDSCVSMAYEKDKTLKELITLGKLTTTVKAGAKIEFRTKFTDVHIRSADEINLMETHDIQQIIRDALNSKRLAVVLFGIGKDGKVTGCHMGPGQQDNLRLALDTAVQTEFAPPIENILDVVDMNFVPVEEMDETFLIVIRVKQLRNQVYRLESSV.

Residues 1-67 form a disordered region; sequence MAALFEENDS…ELSSEEVDIP (67 aa). The interval 247–373 is SLFN-like fold; sequence KAGAKIEFRT…NQVYRLESSV (127 aa).

The protein belongs to the Schlafen family. As to quaternary structure, component of the trimeric PUCH (precursor of 21U RNA 5'-end cleavage holoenzyme) complex; consisting of tofu-1, tofu-2 and either slfl-3 or slfl-4; which is required for processing of piRNA precursors. Within the complex, interacts (via N-terminus) with tofu-2 (via N-terminus); the interaction stabilizes tofu-2 and may form a functional nuclease. Within the complex, required for the interaction of tofu-2 (via N-terminus) with slfl-3 (via N-terminus). Interacts (via residues 82-172) with the PETISCO complex subunit tofu-6 (via residues 120-314); the interaction between the PETISCO and PUCH complex members enhances piRNA production in vivo. As to expression, expressed in the germline.

It localises to the cytoplasm. Component of the trimeric PUCH (precursor of 21U RNA 5'-end cleavage holoenzyme) complex, that acts as an endoribonuclease processing the 5'-end of precursor Piwi-interacting RNAs (piRNAs). The PUCH complex consists of tofu-1, tofu-2 and either slfl-3 or slfl-4, with tofu-2 exhibiting endoribonuclease activity. PUCH-mediated processing strictly requires a 7-methyl-G cap (m7 G-cap) and an uracil at position three (U3). PUCH also exhibits a strict bias for piRNA precursors with an A or G at position 1. Mature piRNA production is enhanced by the interaction of PUCH with the PETISCO complex, which is stabilizing piRNA precursors and allows their processing by PUCH. This chain is Schlafen-like protein 1, found in Caenorhabditis elegans.